Here is a 486-residue protein sequence, read N- to C-terminus: E3 ubiquitin-protein ligase TRIM50 (486 aa).

The RING-type zinc-finger motif lies at 16-57; that stretch reads CPVCLEVFKEPLMLQCGHSYCKGCLLSLSRHLDSELRCPVCR. The B box-type zinc-finger motif lies at 84-125; the sequence is PEPQVCTHHRNPLSLFCEKDQELICGLCGLLGSHQHHRVTPV. Residues cysteine 89, histidine 92, cysteine 111, and histidine 117 each contribute to the Zn(2+) site. 2 coiled-coil regions span residues 125–170 and 204–235; these read VSTV…ESDV and LVAS…FGNE. Residues 275–474 form the B30.2/SPRY domain; the sequence is DIKLTVWKRL…LPMVLPLPSG (200 aa). The residue at position 372 (lysine 372) is an N6-acetyllysine.

The protein belongs to the TRIM/RBCC family. Can form dimers and trimers. Interacts with several E2 ubiquitin-conjugating enzymes, including UBE2L6, UBE2E1, UBE2E3. No interaction with UBE2H. Interacts with BECN1. Interacts with SQSTM1. Interacts with NLRP3. Post-translationally, auto-ubiquitinated. In terms of processing, acetylated by EP300 and KAT2B. HDAC6 drives TRIM50 deacetylation. Acetylation antagonizes with TRIM50 ubiquitination.

It localises to the cytoplasm. It catalyses the reaction S-ubiquitinyl-[E2 ubiquitin-conjugating enzyme]-L-cysteine + [acceptor protein]-L-lysine = [E2 ubiquitin-conjugating enzyme]-L-cysteine + N(6)-ubiquitinyl-[acceptor protein]-L-lysine.. Its function is as follows. E3 ubiquitin-protein ligase that ubiquitinates Beclin-1/BECN1 in a 'Lys-63'-dependent manner enhancing its binding to ULK1. In turn, promotes starvation-induced autophagy activation. Also interacts with p62/SQSTM1 protein and thereby induces the formation and the autophagy clearance of aggresome-associated polyubiquitinated proteins through HDAC6 interaction. Also promotes NLRP3 inflammasome activation by directly inducing NLRP3 oligomerization independent of its E3 ligase function. This Sus scrofa (Pig) protein is E3 ubiquitin-protein ligase TRIM50 (TRIM50).